The following is a 256-amino-acid chain: MGYLKRIGMCISLLIVIIFVTSCGGGNKITGDSKETQIKKSFAKTLDMYPIKNLEDLYDKEGYRDGEFKKGDKGMWTIYTDFAKSNKPGELDDEGMVLNLDRNTRTAKGYYFVKKFYEKDKLPDRKNYKVEMKNNKSILLDKVEDPNLKKRIENFKFFGQYANFKDLENYNNGDVSINWNVPSYDVEYKMSNKDENVKQLRSRYNIPTDKAPMLKMHIDGDLKGSSVGYKRLEIDFSKEDRDISVIDYLSYKPAKK.

A signal peptide spans 1-22 (MGYLKRIGMCISLLIVIIFVTS). Cysteine 23 is lipidated: N-palmitoyl cysteine. Cysteine 23 carries the S-diacylglycerol cysteine lipid modification.

Belongs to the staphylococcal tandem lipoprotein family.

Its subcellular location is the cell membrane. This is an uncharacterized protein from Staphylococcus aureus (strain MSSA476).